The primary structure comprises 256 residues: Autophagy-related protein 40 (256 aa).

A signal peptide spans 1-16; it reads MFNLILWPLFLLTSVA. Residues 17–67 lie on the Lumenal side of the membrane; the sequence is IPLQLTLEVVYLTSSVDFSKASAAKTATSLGQSPVVITIYKSLLKYWSLYE. The helical transmembrane segment at 68 to 88 threads the bilayer; sequence FIHFIYLYTPIDAFLNFLPFT. Topologically, residues 89-256 are cytoplasmic; that stretch reads SLLMSFGSIC…DILDETTELD (168 aa). Residues 197–243 form a disordered region; sequence QPQGDKNRYQNGDRESTKNGAAYQKSSQQSSSFEQNFTSTEFPNDYD. A compositionally biased stretch (basic and acidic residues) spans 199–213; that stretch reads QGDKNRYQNGDREST. Low complexity predominate over residues 222-238; it reads SSQQSSSFEQNFTSTEF. The ATG8-binding motif lies at 242-245; it reads YDFM.

Interacts with ATG8 and ATG11.

The protein resides in the endoplasmic reticulum membrane. The protein localises to the preautophagosomal structure membrane. Functionally, acts as a receptor for reticulophagy. Directs autophagic sequestration of folded tubules/sheets derived from the cortical endoplasmic reticulum (cER) and the cytoplasmic endoplasmic reticulum (cytoER) into autophagosomes. Is not required for the cytoplasm-to-vacuole targeting pathway, mitophagy, pexophagy, and non-selective autophagy. This Saccharomyces cerevisiae (strain ATCC 204508 / S288c) (Baker's yeast) protein is Autophagy-related protein 40.